The following is a 372-amino-acid chain: D-alanine--D-alanine ligase (372 aa).

An ATP-grasp domain is found at 145–349 (KTVLRAGGIP…CPNLLDQLIE (205 aa)). 176–231 (DRWGTSELFVKAVSLGSSVATLPVKTETEFTKAVKEVFRYDDRLMVEPRIRGREIE) provides a ligand contact to ATP. The Mg(2+) site is built by aspartate 303, glutamate 316, and asparagine 318.

It belongs to the D-alanine--D-alanine ligase family. It depends on Mg(2+) as a cofactor. The cofactor is Mn(2+).

It localises to the cytoplasm. It catalyses the reaction 2 D-alanine + ATP = D-alanyl-D-alanine + ADP + phosphate + H(+). It functions in the pathway cell wall biogenesis; peptidoglycan biosynthesis. Cell wall formation. The protein is D-alanine--D-alanine ligase of Coxiella burnetii (strain RSA 331 / Henzerling II).